The primary structure comprises 316 residues: Glutathione synthetase (316 aa).

Residues 125–310 enclose the ATP-grasp domain; that stretch reads KLFTAWFSDL…ITGMLMDAIE (186 aa). 151–207 contributes to the ATP binding site; the sequence is WEKHSDIILKPLDGMGGASIFRVKEGDPNLGVIAETLTEHGTRYCMAQNYLPAIKDG. Positions 281 and 283 each coordinate Mg(2+).

The protein belongs to the prokaryotic GSH synthase family. The cofactor is Mg(2+). Requires Mn(2+) as cofactor.

The catalysed reaction is gamma-L-glutamyl-L-cysteine + glycine + ATP = glutathione + ADP + phosphate + H(+). The protein operates within sulfur metabolism; glutathione biosynthesis; glutathione from L-cysteine and L-glutamate: step 2/2. The polypeptide is Glutathione synthetase (Escherichia coli O6:H1 (strain CFT073 / ATCC 700928 / UPEC)).